Consider the following 709-residue polypeptide: MAETLEFNDIFQEVKGSMNDGRLRLSRQGIIFKNSKTGKVDNIQAGELTEGIWRRVALGHGLKLLTKNGHVYKYDGFRESEFEKLSDFFKTHYRLELMEKDLCVKGWNWGTVKFGGQLLSFDIGDQPVFEIPLSNVSQCTTGKNEVTLEFHQNDDAEVSLMEVRFYVPPTQEDGVDPVEAFAQNVLSKADVIQATGDAICIFRELQCLTPRGRYDIRIYPTFLHLHGKTFDYKIPYTTVLRLFLLPHKDQRQMFFVISLDPPIKQGQTRYHFLILLFSKDEDISLTLNMNEEEVEKRFEGRLTKNMSGSLYEMVSRVMKALVNRKITVPGNFQGHSGAQCITCSYKASSGLLYPLERGFIYVHKPPVHIRFDEISFVNFARGTTTTRSFDFEIETKQGTQYTFSSIEREEYGKLFDFVNAKKLNIKNRGLKEGINPGYDDYADSDEDQHDAYLERMKEEGKIREENANDSSDDSGEETDESFNPGEEEEDVAEEFDSNASASSSSNEGDSDREEKKRKQLKRAKMAKDRKSRKKSSEGKKGKDPNAPKRPMSAYMLWLNASREKIKSDHPGISITDLSKKAGEIWKGMSKEKKEEWDRKAEDARREYEKAMKEYEGGRGDSSKRDKSKKKKKVKAKLEKKSTPSRGSSSKSSSRQLSDSFKSKEFVSSDESSSGENKSKKKRRRSEDSDEEELASTPPSSEDSASGSDE.

Position 2 is an N-acetylalanine (alanine 2). A Glycyl lysine isopeptide (Lys-Gly) (interchain with G-Cter in SUMO2) cross-link involves residue lysine 90. Threonine 170 is subject to Phosphothreonine. At lysine 233 the chain carries N6-acetyllysine. Glycyl lysine isopeptide (Lys-Gly) (interchain with G-Cter in SUMO2) cross-links involve residues lysine 296 and lysine 364. Lysine 413 bears the N6-acetyllysine mark. Tyrosine 441 carries the post-translational modification Phosphotyrosine. Position 444 is a phosphoserine (serine 444). Tyrosine 452 carries the post-translational modification Phosphotyrosine. The tract at residues 458–709 (EEGKIREENA…SEDSASGSDE (252 aa)) is disordered. Acidic residues predominate over residues 470–496 (SSDDSGEETDESFNPGEEEEDVAEEFD). Serine 471 is modified (phosphoserine). Low complexity predominate over residues 497-507 (SNASASSSSNE). Residue serine 510 is modified to Phosphoserine; by CK2. The segment covering 515–533 (KKRKQLKRAKMAKDRKSRK) has biased composition (basic residues). Basic and acidic residues-rich tracts occupy residues 534–546 (KSSE…DPNA) and 577–624 (LSKK…SSKR). At lysine 542 the chain carries N6-acetyllysine. Positions 547–615 (PKRPMSAYML…EYEKAMKEYE (69 aa)) form a DNA-binding region, HMG box. The span at 625–634 (DKSKKKKKVK) shows a compositional bias: basic residues. A compositionally biased stretch (low complexity) spans 643–659 (PSRGSSSKSSSRQLSDS). Serine 657 is modified (phosphoserine; by CK2). Phosphoserine occurs at positions 659, 667, 668, 671, 672, and 673. Residue serine 688 is modified to Phosphoserine; by CK2. A compositionally biased stretch (polar residues) spans 696–709 (TPPSSEDSASGSDE).

Belongs to the SSRP1 family. Interacts with MYOG (via C-terminal region). Component of the FACT complex, a stable heterodimer of SSRP1 and SUPT16H. Also a component of a CK2-SPT16-SSRP1 complex which forms following UV irradiation, composed of SSRP1, SUPT16H, CSNK2A1, CSNK2A2 and CSNK2B. Binds to histone H3-H4 tetramers, but not to intact nucleosomes. Identified in a centromere complex containing histones H2A, H2B and H4, and at least CENPA, CENPB, CENPC, CENPT, CENPN, HJURP, SUPT16H, SSRP1 and RSF1. Interacts with isoform gamma of TP63. Interacts with FYTTD1/UIF. Interacts with SRF. Interacts with NEK9. Phosphorylated by CK2 following UV but not gamma irradiation. Phosphorylation inhibits its DNA-binding activity. In terms of processing, ubiquitinated. Polyubiquitinated following caspase cleavage resulting in degradation of the N-terminal ubiquitinated part of the cleaved protein. Post-translationally, sumoylated.

Its subcellular location is the nucleus. It is found in the chromosome. The protein localises to the nucleolus. In terms of biological role, component of the FACT complex, a general chromatin factor that acts to reorganize nucleosomes. The FACT complex is involved in multiple processes that require DNA as a template such as mRNA elongation, DNA replication and DNA repair. During transcription elongation the FACT complex acts as a histone chaperone that both destabilizes and restores nucleosomal structure. It facilitates the passage of RNA polymerase II and transcription by promoting the dissociation of one histone H2A-H2B dimer from the nucleosome, then subsequently promotes the reestablishment of the nucleosome following the passage of RNA polymerase II. The FACT complex is probably also involved in phosphorylation of 'Ser-392' of p53/TP53 via its association with CK2 (casein kinase II). Binds specifically to double-stranded DNA and at low levels to DNA modified by the antitumor agent cisplatin. May potentiate cisplatin-induced cell death by blocking replication and repair of modified DNA. Also acts as a transcriptional coactivator for p63/TP63. The protein is FACT complex subunit SSRP1 (Ssrp1) of Rattus norvegicus (Rat).